A 436-amino-acid chain; its full sequence is Gamma-glutamyl phosphate reductase (436 aa).

The protein belongs to the gamma-glutamyl phosphate reductase family.

The protein localises to the cytoplasm. It catalyses the reaction L-glutamate 5-semialdehyde + phosphate + NADP(+) = L-glutamyl 5-phosphate + NADPH + H(+). The protein operates within amino-acid biosynthesis; L-proline biosynthesis; L-glutamate 5-semialdehyde from L-glutamate: step 2/2. Its function is as follows. Catalyzes the NADPH-dependent reduction of L-glutamate 5-phosphate into L-glutamate 5-semialdehyde and phosphate. The product spontaneously undergoes cyclization to form 1-pyrroline-5-carboxylate. In Prochlorococcus marinus (strain MIT 9215), this protein is Gamma-glutamyl phosphate reductase.